Here is a 120-residue protein sequence, read N- to C-terminus: UPF0231 protein Ent638_0667 (120 aa).

This sequence belongs to the UPF0231 family.

In Enterobacter sp. (strain 638), this protein is UPF0231 protein Ent638_0667.